Here is an 874-residue protein sequence, read N- to C-terminus: Alanine--tRNA ligase (874 aa).

4 residues coordinate Zn(2+): H562, H566, C664, and H668.

Belongs to the class-II aminoacyl-tRNA synthetase family. Requires Zn(2+) as cofactor.

The protein localises to the cytoplasm. The catalysed reaction is tRNA(Ala) + L-alanine + ATP = L-alanyl-tRNA(Ala) + AMP + diphosphate. Its function is as follows. Catalyzes the attachment of alanine to tRNA(Ala) in a two-step reaction: alanine is first activated by ATP to form Ala-AMP and then transferred to the acceptor end of tRNA(Ala). Also edits incorrectly charged Ser-tRNA(Ala) and Gly-tRNA(Ala) via its editing domain. In Neisseria meningitidis serogroup C / serotype 2a (strain ATCC 700532 / DSM 15464 / FAM18), this protein is Alanine--tRNA ligase.